The primary structure comprises 186 residues: Large ribosomal subunit protein uL10 (186 aa).

The protein belongs to the universal ribosomal protein uL10 family. In terms of assembly, part of the ribosomal stalk of the 50S ribosomal subunit. The N-terminus interacts with L11 and the large rRNA to form the base of the stalk. The C-terminus forms an elongated spine to which L12 dimers bind in a sequential fashion forming a multimeric L10(L12)X complex.

In terms of biological role, forms part of the ribosomal stalk, playing a central role in the interaction of the ribosome with GTP-bound translation factors. This chain is Large ribosomal subunit protein uL10 (rplJ), found in Streptomyces virginiae (Streptomyces cinnamonensis).